A 396-amino-acid polypeptide reads, in one-letter code: Acetate kinase (396 aa).

Residue asparagine 8 coordinates Mg(2+). ATP is bound at residue lysine 15. Arginine 90 lines the substrate pocket. Aspartate 147 acts as the Proton donor/acceptor in catalysis. Residues 207 to 211 (HLGSG), 283 to 285 (DMR), and 330 to 334 (GIGEN) contribute to the ATP site. Residue glutamate 384 coordinates Mg(2+).

This sequence belongs to the acetokinase family. Homodimer. Mg(2+) serves as cofactor. Requires Mn(2+) as cofactor.

It localises to the cytoplasm. It carries out the reaction acetate + ATP = acetyl phosphate + ADP. It participates in metabolic intermediate biosynthesis; acetyl-CoA biosynthesis; acetyl-CoA from acetate: step 1/2. Its function is as follows. Catalyzes the formation of acetyl phosphate from acetate and ATP. Can also catalyze the reverse reaction. The polypeptide is Acetate kinase (Lacticaseibacillus paracasei (strain ATCC 334 / BCRC 17002 / CCUG 31169 / CIP 107868 / KCTC 3260 / NRRL B-441) (Lactobacillus paracasei)).